A 246-amino-acid polypeptide reads, in one-letter code: Phosphomannomutase (246 aa).

Catalysis depends on Asp-13, which acts as the Nucleophile. The Mg(2+) site is built by Asp-13 and Asp-15. The active-site Proton donor/acceptor is Asp-15. Arg-22, Arg-124, Arg-135, Arg-142, Ser-180, and Asp-182 together coordinate alpha-D-mannose 1-phosphate. Positions 208, 220, and 225 each coordinate Mg(2+).

This sequence belongs to the eukaryotic PMM family. As to quaternary structure, homodimer. Mg(2+) serves as cofactor. Expressed in roots, stems, leaves, flowers and immature fruits.

Its subcellular location is the cytoplasm. The catalysed reaction is alpha-D-mannose 1-phosphate = D-mannose 6-phosphate. Its pathway is nucleotide-sugar biosynthesis; GDP-alpha-D-mannose biosynthesis; alpha-D-mannose 1-phosphate from D-fructose 6-phosphate: step 2/2. Catalyzes the interconversion of mannose-6-phosphate to mannose-1-phosphate, the precursor for the synthesis of GDP-mannose. GDP-mannose is an essential sugar nucleotide for the synthesis of D-mannose-containing cell wall polysaccharides (galactomannans and glucomannans), glycolipids, glycoproteins and the antioxidant L-ascorbate. Can complement the yeast temperature-sensitive mutant sec53-6. This is Phosphomannomutase from Arabidopsis thaliana (Mouse-ear cress).